A 98-amino-acid chain; its full sequence is MPSISINITLAFTTALLGMLMFRSHMMSSLLCLEGMMLSMFILSTLIILNVQLTMSFMMPILLLVFAACEAAIGLALLVMISNTYGLDYIQNLNLLQC.

3 helical membrane-spanning segments follow: residues 2–22 (PSISINITLAFTTALLGMLMF), 29–49 (SLLCLEGMMLSMFILSTLIIL), and 61–81 (ILLLVFAACEAAIGLALLVMI).

This sequence belongs to the complex I subunit 4L family. As to quaternary structure, core subunit of respiratory chain NADH dehydrogenase (Complex I) which is composed of 45 different subunits.

It is found in the mitochondrion inner membrane. It catalyses the reaction a ubiquinone + NADH + 5 H(+)(in) = a ubiquinol + NAD(+) + 4 H(+)(out). Core subunit of the mitochondrial membrane respiratory chain NADH dehydrogenase (Complex I) which catalyzes electron transfer from NADH through the respiratory chain, using ubiquinone as an electron acceptor. Part of the enzyme membrane arm which is embedded in the lipid bilayer and involved in proton translocation. The polypeptide is NADH-ubiquinone oxidoreductase chain 4L (MT-ND4L) (Mirza coquereli (Coquerel's giant mouse lemur)).